Consider the following 1492-residue polypeptide: DNA-directed RNA polymerase subunit beta' (1492 aa).

4 residues coordinate Zn(2+): cysteine 67, cysteine 69, cysteine 82, and cysteine 85. Mg(2+) contacts are provided by aspartate 499, aspartate 501, and aspartate 503. Zn(2+)-binding residues include cysteine 867, cysteine 943, cysteine 950, and cysteine 953.

The protein belongs to the RNA polymerase beta' chain family. In terms of assembly, the RNAP catalytic core consists of 2 alpha, 1 beta, 1 beta' and 1 omega subunit. When a sigma factor is associated with the core the holoenzyme is formed, which can initiate transcription. Requires Mg(2+) as cofactor. Zn(2+) is required as a cofactor.

The catalysed reaction is RNA(n) + a ribonucleoside 5'-triphosphate = RNA(n+1) + diphosphate. Functionally, DNA-dependent RNA polymerase catalyzes the transcription of DNA into RNA using the four ribonucleoside triphosphates as substrates. The protein is DNA-directed RNA polymerase subunit beta' of Chlorobium phaeobacteroides (strain DSM 266 / SMG 266 / 2430).